The primary structure comprises 628 residues: Kelch-like protein diablo (628 aa).

The disordered stretch occupies residues methionine 1 to histidine 56. Residues proline 14–asparagine 29 show a composition bias toward low complexity. The 68-residue stretch at cysteine 74–glutamate 141 folds into the BTB domain. The BACK domain maps to cysteine 176 to glycine 278. Kelch repeat units lie at residues valine 325 to aspartate 371, leucine 373 to glycine 419, phenylalanine 420 to glycine 466, leucine 468 to asparagine 513, isoleucine 515 to glycine 560, and glutamine 561 to alanine 607.

Its pathway is protein modification; protein ubiquitination. Functionally, probable substrate-specific adapter of an E3 ubiquitin-protein ligase complex which mediates the ubiquitination and subsequent proteasomal degradation of target proteins. May have a role in synapse differentiation and growth. The chain is Kelch-like protein diablo from Drosophila pseudoobscura pseudoobscura (Fruit fly).